The chain runs to 489 residues: Anthranilate synthase component 1 1 (489 aa).

Residue 262–264 (PYS) participates in L-tryptophan binding. The segment at 288 to 309 (DRIETEPIAGTRPRGETPDADD) is disordered. 297–298 (GT) serves as a coordination point for chorismate. Basic and acidic residues predominate over residues 300-309 (PRGETPDADD). Mg(2+) is bound at residue glutamate 324. Chorismate contacts are provided by residues tyrosine 412, arginine 432, 446–448 (GAG), and glycine 448. Glutamate 461 provides a ligand contact to Mg(2+).

It belongs to the anthranilate synthase component I family. As to quaternary structure, tetramer of two components I and two components II. Mg(2+) serves as cofactor.

It catalyses the reaction chorismate + L-glutamine = anthranilate + pyruvate + L-glutamate + H(+). It functions in the pathway amino-acid biosynthesis; L-tryptophan biosynthesis; L-tryptophan from chorismate: step 1/5. In Haloarcula marismortui (strain ATCC 43049 / DSM 3752 / JCM 8966 / VKM B-1809) (Halobacterium marismortui), this protein is Anthranilate synthase component 1 1 (trpE1).